Reading from the N-terminus, the 339-residue chain is Malate/(S)-sulfolactate dehydrogenase (339 aa).

The protein belongs to the LDH2/MDH2 oxidoreductase family. As to quaternary structure, homodimer.

It localises to the cytoplasm. It catalyses the reaction (S)-malate + NAD(+) = oxaloacetate + NADH + H(+). It carries out the reaction (S)-malate + NADP(+) = oxaloacetate + NADPH + H(+). The enzyme catalyses (2S)-3-sulfolactate + NAD(+) = 3-sulfopyruvate + NADH + H(+). Its function is as follows. Acts on oxaloacetate, sulfopyruvate but not on pyruvate. Has a higher selectivity for the coenzyme NADH than for NADPH. This is Malate/(S)-sulfolactate dehydrogenase (mdh) from Methanothermus fervidus (strain ATCC 43054 / DSM 2088 / JCM 10308 / V24 S).